A 157-amino-acid chain; its full sequence is Endoribonuclease YbeY (157 aa).

Zn(2+) contacts are provided by H116, H120, and H126.

The protein belongs to the endoribonuclease YbeY family. The cofactor is Zn(2+).

It is found in the cytoplasm. Its function is as follows. Single strand-specific metallo-endoribonuclease involved in late-stage 70S ribosome quality control and in maturation of the 3' terminus of the 16S rRNA. The chain is Endoribonuclease YbeY from Renibacterium salmoninarum (strain ATCC 33209 / DSM 20767 / JCM 11484 / NBRC 15589 / NCIMB 2235).